A 210-amino-acid polypeptide reads, in one-letter code: Orotate phosphoribosyltransferase (210 aa).

Residues R97, K101, H103, and 123-131 (EDLISTGGS) contribute to the 5-phospho-alpha-D-ribose 1-diphosphate site. S127 is a binding site for orotate.

This sequence belongs to the purine/pyrimidine phosphoribosyltransferase family. PyrE subfamily. In terms of assembly, homodimer. Mg(2+) is required as a cofactor.

The enzyme catalyses orotidine 5'-phosphate + diphosphate = orotate + 5-phospho-alpha-D-ribose 1-diphosphate. Its pathway is pyrimidine metabolism; UMP biosynthesis via de novo pathway; UMP from orotate: step 1/2. Its function is as follows. Catalyzes the transfer of a ribosyl phosphate group from 5-phosphoribose 1-diphosphate to orotate, leading to the formation of orotidine monophosphate (OMP). This is Orotate phosphoribosyltransferase from Porphyromonas gingivalis (strain ATCC BAA-308 / W83).